Here is a 410-residue protein sequence, read N- to C-terminus: 2-hydroxy-5-methyl-1-naphthoate 7-hydroxylase (410 aa).

Cys350 contacts heme.

It belongs to the cytochrome P450 family. Requires heme as cofactor.

The enzyme catalyses 2-hydroxy-5-methyl-1-naphthoate + 2 reduced [2Fe-2S]-[ferredoxin] + O2 + 2 H(+) = 2,7-dihydroxy-5-methyl-1-naphthoate + 2 oxidized [2Fe-2S]-[ferredoxin] + H2O. It participates in antibiotic biosynthesis. In terms of biological role, involved in the biosynthesis of the naphthoic acid (NA) moiety in the chromophore of the enedyine antitumor antibiotic neocarzinostatin (NCS). Catalyzes the hydroxylation at C-7 position of 2-hydroxy-5-methyl-1-naphthoate to yield 2,7-dihydroxy-5-methyl-1-naphthoate. In Streptomyces carzinostaticus, this protein is 2-hydroxy-5-methyl-1-naphthoate 7-hydroxylase.